The sequence spans 117 residues: Large ribosomal subunit protein bL31B (117 aa).

Residues 75–117 (KRFERKKEASPADTPPESDSTTENASVEKKAEKKRVTAKGSKK) form a disordered region. Over residues 100-109 (SVEKKAEKKR) the composition is skewed to basic and acidic residues.

This sequence belongs to the bacterial ribosomal protein bL31 family. Type B subfamily. In terms of assembly, part of the 50S ribosomal subunit.

This is Large ribosomal subunit protein bL31B from Protochlamydia amoebophila (strain UWE25).